The sequence spans 121 residues: Large ribosomal subunit protein uL22 (121 aa).

Belongs to the universal ribosomal protein uL22 family. Part of the 50S ribosomal subunit.

In terms of biological role, this protein binds specifically to 23S rRNA; its binding is stimulated by other ribosomal proteins, e.g. L4, L17, and L20. It is important during the early stages of 50S assembly. It makes multiple contacts with different domains of the 23S rRNA in the assembled 50S subunit and ribosome. The globular domain of the protein is located near the polypeptide exit tunnel on the outside of the subunit, while an extended beta-hairpin is found that lines the wall of the exit tunnel in the center of the 70S ribosome. This chain is Large ribosomal subunit protein uL22, found in Pseudarthrobacter chlorophenolicus (strain ATCC 700700 / DSM 12829 / CIP 107037 / JCM 12360 / KCTC 9906 / NCIMB 13794 / A6) (Arthrobacter chlorophenolicus).